A 127-amino-acid polypeptide reads, in one-letter code: Ribonuclease VapC6 (127 aa).

Residues Glu26 to Arg120 form the PINc domain. Residue Asp86 coordinates Mg(2+).

Belongs to the PINc/VapC protein family. Mg(2+) serves as cofactor.

Its function is as follows. Toxic component of a type II toxin-antitoxin (TA) system. An RNase. The cognate antitoxin is VapB6. The polypeptide is Ribonuclease VapC6 (Mycobacterium tuberculosis (strain CDC 1551 / Oshkosh)).